We begin with the raw amino-acid sequence, 392 residues long: Phosphoglycerate kinase (392 aa).

Substrate is bound by residues 21–23 (DFN), Arg36, 59–62 (HLGR), Arg113, and Arg146. Residues Lys197, Glu319, and 345-348 (GGDT) each bind ATP.

The protein belongs to the phosphoglycerate kinase family. In terms of assembly, monomer.

The protein localises to the cytoplasm. The enzyme catalyses (2R)-3-phosphoglycerate + ATP = (2R)-3-phospho-glyceroyl phosphate + ADP. It participates in carbohydrate degradation; glycolysis; pyruvate from D-glyceraldehyde 3-phosphate: step 2/5. This Francisella tularensis subsp. tularensis (strain FSC 198) protein is Phosphoglycerate kinase.